Reading from the N-terminus, the 119-residue chain is MAESSGPTAGGGATSSTVTTESDTQPEHRSLTLKLRKRKPDKKVEWTCDTVDNENLGRRSSKCCCIYEKPRPFGESSSESEDEDDCCESAHCIRGHKKATSGSKETPSSHHDKTGSMQH.

The segment at 1–42 (MAESSGPTAGGGATSSTVTTESDTQPEHRSLTLKLRKRKPDK) is disordered. Atypical RING finger domain stretches follow at residues 55–65 (NLGRRSSKCCC) and 87–96 (CESAHCIRGH). A disordered region spans residues 96–119 (HKKATSGSKETPSSHHDKTGSMQH). The segment covering 107 to 119 (PSSHHDKTGSMQH) has biased composition (basic and acidic residues).

The enzyme catalyses S-ubiquitinyl-[E2 ubiquitin-conjugating enzyme]-L-cysteine + [acceptor protein]-L-lysine = [E2 ubiquitin-conjugating enzyme]-L-cysteine + N(6)-ubiquitinyl-[acceptor protein]-L-lysine.. Its pathway is protein modification; protein ubiquitination. Its function is as follows. Atypical E3 ubiquitin-protein ligase which ubiquitinates TLR2 at 'Lys-754' leading to its degradation by the proteasome. Inhibitor of protein phosphatase 1. This is E3 ubiquitin-protein ligase PPP1R11 (ppp1r11) from Xenopus tropicalis (Western clawed frog).